A 403-amino-acid polypeptide reads, in one-letter code: S-adenosylmethionine synthase (403 aa).

An ATP-binding site is contributed by His17. Asp19 provides a ligand contact to Mg(2+). K(+) is bound at residue Glu45. Positions 58 and 104 each coordinate L-methionine. The segment at 104–114 (QSSDIAQGVNT) is flexible loop. Residues 179–181 (DGK), 250–251 (KF), Asp259, 265–266 (RK), Ala282, and Lys286 each bind ATP. Residue Asp259 participates in L-methionine binding. Residue Lys290 coordinates L-methionine.

This sequence belongs to the AdoMet synthase family. Homotetramer; dimer of dimers. Mg(2+) serves as cofactor. Requires K(+) as cofactor.

Its subcellular location is the cytoplasm. It carries out the reaction L-methionine + ATP + H2O = S-adenosyl-L-methionine + phosphate + diphosphate. It functions in the pathway amino-acid biosynthesis; S-adenosyl-L-methionine biosynthesis; S-adenosyl-L-methionine from L-methionine: step 1/1. Its function is as follows. Catalyzes the formation of S-adenosylmethionine (AdoMet) from methionine and ATP. The overall synthetic reaction is composed of two sequential steps, AdoMet formation and the subsequent tripolyphosphate hydrolysis which occurs prior to release of AdoMet from the enzyme. The chain is S-adenosylmethionine synthase from Mycobacterium leprae (strain Br4923).